The chain runs to 477 residues: Acylamidase (477 aa).

Catalysis depends on charge relay system residues K82 and S157. Catalysis depends on S181, which acts as the Acyl-ester intermediate.

It belongs to the amidase family.

It carries out the reaction a monocarboxylic acid amide + H2O = a monocarboxylate + NH4(+). The enzyme catalyses an anilide + H2O = aniline + a carboxylate + H(+). It catalyses the reaction an N-acyl-L-amino acid + H2O = an L-alpha-amino acid + a carboxylate. The catalysed reaction is an N-acetyl-L-cysteine-S-conjugate + H2O = an S-substituted L-cysteine + acetate. With respect to regulation, amidase activity is completely suppressed by inhibitors of serine proteases (phenylmethylsulfonyl fluoride and diisopropyl fluorophosphate), partially inhibited by copper and mercury ions, but is not affected by inhibitors of aliphatic amidases (acetaldehyde and nitrophenyl disulfides) or by EDTA. In terms of biological role, amidase with broad substrate specificity, catalyzing the hydrolysis of a wide range of N-substituted amides, and, to a lesser extent, the hydrolysis of non-substituted amides. Acid para-nitroanilides (4'-nitroacetanilide, Gly-pNA, Ala-pNA, Leu-pNA) are the best substrates for this enzyme. N-substituted acrylamides (isopropyl acrylamide, N,N-dimethyl-aminopropyl acrylamide, and methylene-bis-acrylamide), N-acetyl derivatives of glycine, alanine and leucine, and aliphatic amides (acetamide, acrylamide, isobutyramide, n-butyramide, and valeramide) can also be used as substrates but with less efficiency. The sequence is that of Acylamidase from Rhodococcus erythropolis (Arthrobacter picolinophilus).